Consider the following 262-residue polypeptide: Phosphonates import ATP-binding protein PhnC (262 aa).

Residues 5-253 (IRVEKLAKTF…RFDHLYRSIN (249 aa)) enclose the ABC transporter domain. ATP is bound at residue 37–44 (GPSGSGKS).

Belongs to the ABC transporter superfamily. Phosphonates importer (TC 3.A.1.9.1) family. As to quaternary structure, the complex is composed of two ATP-binding proteins (PhnC), two transmembrane proteins (PhnE) and a solute-binding protein (PhnD).

It is found in the cell inner membrane. It carries out the reaction phosphonate(out) + ATP + H2O = phosphonate(in) + ADP + phosphate + H(+). Functionally, part of the ABC transporter complex PhnCDE involved in phosphonates import. Responsible for energy coupling to the transport system. The sequence is that of Phosphonates import ATP-binding protein PhnC from Shigella dysenteriae serotype 1 (strain Sd197).